The primary structure comprises 231 residues: MALRTLASRKTLAAAALPLAAAAAARGVTTVALPDLPYDYGALEPAISGEIMRLHHQKHHATYVANYNKALEQLDAAVAKGDAPAIVHLQSAIKFNGGGHVNHSIFWNNLKPISEGGGDPPHAKLGWAIDEDFGSFEALVKKMSAEGAALQGSGWVWLALDKEAKKLSVETTANQDPLVTKGANLVPLLGIDVWEHAYYLQYKNVRPDYLSNIWKVMNWKYAGEVYENATA.

The N-terminal 27 residues, 1–27, are a transit peptide targeting the mitochondrion; that stretch reads MALRTLASRKTLAAAALPLAAAAAARG. Residues His55, His103, Asp192, and His196 each coordinate Mn(2+).

The protein belongs to the iron/manganese superoxide dismutase family. As to quaternary structure, homotetramer. Requires Mn(2+) as cofactor.

It localises to the mitochondrion matrix. The catalysed reaction is 2 superoxide + 2 H(+) = H2O2 + O2. Destroys superoxide anion radicals which are normally produced within the cells and which are toxic to biological systems. The chain is Superoxide dismutase [Mn], mitochondrial (SODA) from Oryza sativa subsp. japonica (Rice).